We begin with the raw amino-acid sequence, 624 residues long: Chitin elicitor receptor kinase 1 (624 aa).

Positions 1–18 are cleaved as a signal peptide; that stretch reads MEASTSLLVLVLAAAAFA. Topologically, residues 19–240 are extracellular; the sequence is AGTVTEAAGD…SPGKGASAGA (222 aa). Disulfide bonds link C30–C93, C34–C160, and C91–C158. A glycan (N-linked (GlcNAc...) asparagine) is linked at N48. Chitin is bound at residue 115–121; it reads RGQIYTS. N-linked (GlcNAc...) asparagine glycosylation is present at N128. Residue 142 to 148 coordinates chitin; it reads PANNIPD. N153 and N157 each carry an N-linked (GlcNAc...) asparagine glycan. One can recognise a LysM domain in the interval 173 to 218; the sequence is LTYPLRAEDTLASVAATYGLSSQLDVVRRYNPGMESATGSGIVYIP. N223 carries an N-linked (GlcNAc...) asparagine glycan. A helical transmembrane segment spans residues 241–261; that stretch reads IAGGVVAGVVVLAAIFLYIIF. Over 262–624 the chain is Cytoplasmic; the sequence is YRRRKAKQAT…QGLVNLMSGR (363 aa). In terms of domain architecture, Protein kinase spans 324-599; the sequence is FSIGNKIGQG…RSVVVALMTL (276 aa). Residues 330 to 338 and K351 each bind ATP; that span reads IGQGGFGAV. D443 functions as the Proton acceptor in the catalytic mechanism.

The protein belongs to the protein kinase superfamily. Ser/Thr protein kinase family. In terms of assembly, homooligomer. Interacts with CEBIP. Interacts with LYP4 and LYP6. Interacts with RLCK176. Autophosphorylated; induced by chitin and derivatives. As to expression, expressed in seedlings, roots, shoots and stems, and, to a lower extent, in flowers.

It localises to the cell membrane. The enzyme catalyses L-seryl-[protein] + ATP = O-phospho-L-seryl-[protein] + ADP + H(+). It catalyses the reaction L-threonyl-[protein] + ATP = O-phospho-L-threonyl-[protein] + ADP + H(+). Lysin motif (LysM) receptor kinase required as a cell surface receptor for chitin elicitor (chitooligosaccharides) signaling leading to innate immunity in response to biotic stresses. Involved in the resistance to pathogenic fungi, probably by sensing microbe-associated molecular patterns (MAMP) and pathogen-associated molecular patterns (PAMP). Involved in the detection of microbial peptidoglycans (PGNs) and mediates PGN response. Plays dual roles in PGN and chitin signaling during innate immunity. Acts as an adapter for LYP4 and LYP6 and mediates signal transduction from the extracellular to intracellular spaces. Participates in the activation of defense genes during response to PGN and chitin. Phosphorylates the downstream partner RLCK185 in response to chitin elicitation. The chain is Chitin elicitor receptor kinase 1 from Oryza sativa subsp. japonica (Rice).